Here is a 159-residue protein sequence, read N- to C-terminus: Phosphopantetheine adenylyltransferase (159 aa).

Position 10 (Thr-10) interacts with substrate. Residues 10 to 11 and His-18 contribute to the ATP site; that span reads TF. Residues Lys-42, Met-74, and Arg-88 each contribute to the substrate site. Residues 89-91, Glu-99, and 124-130 contribute to the ATP site; these read GLR and WSFISSS.

It belongs to the bacterial CoaD family. As to quaternary structure, homohexamer. Requires Mg(2+) as cofactor.

Its subcellular location is the cytoplasm. The catalysed reaction is (R)-4'-phosphopantetheine + ATP + H(+) = 3'-dephospho-CoA + diphosphate. The protein operates within cofactor biosynthesis; coenzyme A biosynthesis; CoA from (R)-pantothenate: step 4/5. Reversibly transfers an adenylyl group from ATP to 4'-phosphopantetheine, yielding dephospho-CoA (dPCoA) and pyrophosphate. The chain is Phosphopantetheine adenylyltransferase from Escherichia fergusonii (strain ATCC 35469 / DSM 13698 / CCUG 18766 / IAM 14443 / JCM 21226 / LMG 7866 / NBRC 102419 / NCTC 12128 / CDC 0568-73).